Consider the following 612-residue polypeptide: Dihydroxy-acid dehydratase (612 aa).

Residue Asp81 coordinates Mg(2+). Cys122 contributes to the [2Fe-2S] cluster binding site. 2 residues coordinate Mg(2+): Asp123 and Lys124. The residue at position 124 (Lys124) is an N6-carboxylysine. Cys193 contributes to the [2Fe-2S] cluster binding site. Glu489 is a binding site for Mg(2+). Catalysis depends on Ser515, which acts as the Proton acceptor.

The protein belongs to the IlvD/Edd family. Homodimer. It depends on [2Fe-2S] cluster as a cofactor. The cofactor is Mg(2+).

It catalyses the reaction (2R)-2,3-dihydroxy-3-methylbutanoate = 3-methyl-2-oxobutanoate + H2O. It carries out the reaction (2R,3R)-2,3-dihydroxy-3-methylpentanoate = (S)-3-methyl-2-oxopentanoate + H2O. The protein operates within amino-acid biosynthesis; L-isoleucine biosynthesis; L-isoleucine from 2-oxobutanoate: step 3/4. It participates in amino-acid biosynthesis; L-valine biosynthesis; L-valine from pyruvate: step 3/4. Functions in the biosynthesis of branched-chain amino acids. Catalyzes the dehydration of (2R,3R)-2,3-dihydroxy-3-methylpentanoate (2,3-dihydroxy-3-methylvalerate) into 2-oxo-3-methylpentanoate (2-oxo-3-methylvalerate) and of (2R)-2,3-dihydroxy-3-methylbutanoate (2,3-dihydroxyisovalerate) into 2-oxo-3-methylbutanoate (2-oxoisovalerate), the penultimate precursor to L-isoleucine and L-valine, respectively. The sequence is that of Dihydroxy-acid dehydratase from Stutzerimonas stutzeri (strain A1501) (Pseudomonas stutzeri).